The primary structure comprises 344 residues: Protein POLAR LOCALIZATION DURING ASYMMETRIC DIVISION AND REDISTRIBUTION (344 aa).

Thr-19 is subject to Phosphothreonine; by ASK7. At Ser-79 the chain carries Phosphoserine; by ASK7. 2 positions are modified to phosphothreonine; by ASK7: Thr-84 and Thr-86. Residues Ser-91 and Ser-94 each carry the phosphoserine; by ASK7 modification. A phosphothreonine; by ASK7 mark is found at Thr-193, Thr-217, and Thr-233. Phosphoserine; by ASK7 is present on Ser-235. Residues 262–297 (LETRQQEELVKLETALNRVERRLQEKETEVSWWKDA) are a coiled coil. Phosphoserine; by ASK7 is present on residues Ser-308, Ser-309, Ser-320, Ser-321, and Ser-336.

In terms of assembly, component of a complex made of POLAR, BASL, ASK7/BIN2 and ASK3/SK12. Interacts with BASL, ASK7/BIN2 and ASK3/SK12. In terms of processing, phosphorylation by ASK7/BIN2 is increases turnover. As to expression, expressed in stomatal lineage cells with asymmetric division potential.

The protein resides in the cytoplasm. It is found in the cell cortex. In terms of biological role, regulates asymmetric cell division (ACD), especially in stomatal-lineage cells. Acts as a stomatal lineage scaffold which regulates subcellular localization and transient polarization of kinases (e.g. ASK7/BIN2 and ASK3/SK12) involved in ACD in a BASL-dependent manner. Promotes the differentiation of both pavement cells and stomata. This chain is Protein POLAR LOCALIZATION DURING ASYMMETRIC DIVISION AND REDISTRIBUTION, found in Arabidopsis thaliana (Mouse-ear cress).